Reading from the N-terminus, the 507-residue chain is Maturase K (507 aa).

Belongs to the intron maturase 2 family. MatK subfamily.

It localises to the plastid. It is found in the chloroplast. Functionally, usually encoded in the trnK tRNA gene intron. Probably assists in splicing its own and other chloroplast group II introns. This is Maturase K from Cananga odorata (Ylang-ylang tree).